Consider the following 180-residue polypeptide: Translation initiation factor IF-3 (180 aa).

Belongs to the IF-3 family. As to quaternary structure, monomer.

The protein resides in the cytoplasm. Its function is as follows. IF-3 binds to the 30S ribosomal subunit and shifts the equilibrium between 70S ribosomes and their 50S and 30S subunits in favor of the free subunits, thus enhancing the availability of 30S subunits on which protein synthesis initiation begins. This Xylella fastidiosa (strain Temecula1 / ATCC 700964) protein is Translation initiation factor IF-3.